The primary structure comprises 605 residues: Probable potassium transport system protein Kup (605 aa).

A run of 12 helical transmembrane segments spans residues 17–37 (GLVF…IFAL), 45–65 (VFGI…VEYA), 96–116 (IAFV…DGVI), 140–160 (LGTL…FQFK), 165–185 (VAAA…VSGL), 211–231 (GISA…GEAL), 246–266 (AWYF…AFAL), 286–306 (LYIP…QALI), 338–358 (IYIG…MLIF), 367–387 (AYGL…TIIF), 394–414 (WKVP…ISNL), and 417–437 (LPHG…TILI).

Belongs to the HAK/KUP transporter (TC 2.A.72) family.

The protein localises to the cell inner membrane. The catalysed reaction is K(+)(in) + H(+)(in) = K(+)(out) + H(+)(out). Transport of potassium into the cell. Likely operates as a K(+):H(+) symporter. This Geotalea uraniireducens (strain Rf4) (Geobacter uraniireducens) protein is Probable potassium transport system protein Kup.